The primary structure comprises 24 residues: Chaperonin GroEL (24 aa).

It belongs to the chaperonin (HSP60) family. In terms of assembly, forms a cylinder of 14 subunits composed of two heptameric rings stacked back-to-back. Interacts with the co-chaperonin GroES.

Its subcellular location is the cytoplasm. It carries out the reaction ATP + H2O + a folded polypeptide = ADP + phosphate + an unfolded polypeptide.. Functionally, together with its co-chaperonin GroES, plays an essential role in assisting protein folding. The GroEL-GroES system forms a nano-cage that allows encapsulation of the non-native substrate proteins and provides a physical environment optimized to promote and accelerate protein folding. This chain is Chaperonin GroEL, found in Acinetobacter calcoaceticus.